The following is a 241-amino-acid chain: Lipoprotein MxiJ (241 aa).

The first 17 residues, 1–17 (MIRYKGFILFLLLMLIG), serve as a signal peptide directing secretion. A lipid anchor (N-palmitoyl cysteine) is attached at C18. C18 carries the S-diacylglycerol cysteine lipid modification.

It belongs to the YscJ lipoprotein family.

It localises to the cell outer membrane. Functionally, involved in the secretion of the Ipa antigens. The protein is Lipoprotein MxiJ (mxiJ) of Shigella sonnei.